A 530-amino-acid polypeptide reads, in one-letter code: Probable basic-leucine zipper transcription factor L (530 aa).

2 stretches are compositionally biased toward low complexity: residues 1 to 17 (MYSP…SPES) and 24 to 39 (SINN…ANQS). The interval 1–76 (MYSPSSPQSS…QSAALSRSRK (76 aa)) is disordered. Positions 55–118 (VKKRQVRLLK…FETKSRLEFL (64 aa)) constitute a bZIP domain. Residues 56-77 (KKRQVRLLKNRQSAALSRSRKK) form a basic motif region. The segment at 83–104 (LESKAQELTHSTQELHVQYNKI) is leucine-zipper. Disordered regions lie at residues 142-177 (NNIK…TTPV), 216-258 (SQNK…SPTP), and 389-481 (HHHH…SQIN). Composition is skewed to low complexity over residues 149–176 (RSNS…STTP) and 220–247 (NNNN…NTTN). Residues 248–257 (LLDQQQQSPT) show a composition bias toward polar residues. A compositionally biased stretch (low complexity) spans 436-478 (SSSPSSSSTSSPSTSSPSTPKSMGFPSPIFIGSSGSGPSSSGS).

The protein belongs to the bZIP family.

Its subcellular location is the nucleus. Probable transcriptional regulator. In Dictyostelium discoideum (Social amoeba), this protein is Probable basic-leucine zipper transcription factor L (bzpL).